The primary structure comprises 25 residues: Secapin-1 (25 aa).

Cysteine 9 and cysteine 20 are disulfide-bonded.

In terms of tissue distribution, expressed by the venom gland.

It localises to the secreted. In terms of biological role, serine protease inhibitor which exhibits antifibrinolytic, antielastolytic and antimicrobial activities. Displays antimicrobial activity against bacteria and fungi. Likely functions in the innate immune response to microbial infection and possibly in the venom, as an antifibrinolytic agent. This is Secapin-1 from Apis mellifera (Honeybee).